We begin with the raw amino-acid sequence, 1369 residues long: Phospholipase D1 (1369 aa).

Disordered regions lie at residues 27–90 (YSEK…SSWH) and 318–340 (ESHS…GRKK). The span at 31-53 (GTGRKDAEDHTPSKITDLEKNVD) shows a compositional bias: basic and acidic residues. A PX domain is found at 208–379 (TDLIKVSVLD…NVLYSFLEFS (172 aa)). 2 PLD phosphodiesterase domains span residues 641–668 (LFWA…CFGR) and 941–968 (EMIY…NERS). Basic and acidic residues predominate over residues 1277-1289 (HETHEKSENDPKN). Residues 1277–1320 (HETHEKSENDPKNPKAGSQGSGNTSASEDSKTEKPKTRTNNGLQ) form a disordered region. Polar residues predominate over residues 1292 to 1303 (AGSQGSGNTSAS).

Belongs to the phospholipase D family.

The protein resides in the cytoplasm. The enzyme catalyses a 1,2-diacyl-sn-glycero-3-phosphocholine + H2O = a 1,2-diacyl-sn-glycero-3-phosphate + choline + H(+). Its activity is regulated as follows. Activity is slightly stimulated by oleate. In terms of biological role, required for meiosis and spore formation. Seems to be involved in the coordinate induction of late meiotic events. In Schizosaccharomyces pombe (strain 972 / ATCC 24843) (Fission yeast), this protein is Phospholipase D1 (pld1).